The chain runs to 63 residues: Large ribosomal subunit protein uL29 (63 aa).

This sequence belongs to the universal ribosomal protein uL29 family.

The polypeptide is Large ribosomal subunit protein uL29 (Colwellia psychrerythraea (strain 34H / ATCC BAA-681) (Vibrio psychroerythus)).